Here is a 480-residue protein sequence, read N- to C-terminus: Methylenetetrahydrofolate--tRNA-(uracil-5-)-methyltransferase TrmFO (480 aa).

15–20 serves as a coordination point for FAD; it reads GGGLAG.

The protein belongs to the MnmG family. TrmFO subfamily. The cofactor is FAD.

The protein localises to the cytoplasm. It carries out the reaction uridine(54) in tRNA + (6R)-5,10-methylene-5,6,7,8-tetrahydrofolate + NADH + H(+) = 5-methyluridine(54) in tRNA + (6S)-5,6,7,8-tetrahydrofolate + NAD(+). The catalysed reaction is uridine(54) in tRNA + (6R)-5,10-methylene-5,6,7,8-tetrahydrofolate + NADPH + H(+) = 5-methyluridine(54) in tRNA + (6S)-5,6,7,8-tetrahydrofolate + NADP(+). Functionally, catalyzes the folate-dependent formation of 5-methyl-uridine at position 54 (M-5-U54) in all tRNAs. In Caulobacter sp. (strain K31), this protein is Methylenetetrahydrofolate--tRNA-(uracil-5-)-methyltransferase TrmFO.